A 415-amino-acid chain; its full sequence is Histidine--tRNA ligase (415 aa).

It belongs to the class-II aminoacyl-tRNA synthetase family. Homodimer.

It localises to the cytoplasm. The enzyme catalyses tRNA(His) + L-histidine + ATP = L-histidyl-tRNA(His) + AMP + diphosphate + H(+). This chain is Histidine--tRNA ligase, found in Clostridium botulinum (strain Kyoto / Type A2).